The primary structure comprises 275 residues: Translation initiation factor 2 subunit alpha (275 aa).

An S1 motif domain is found at Gly12–Arg83.

The protein belongs to the eIF-2-alpha family. Heterotrimer composed of an alpha, a beta and a gamma chain.

Functionally, eIF-2 functions in the early steps of protein synthesis by forming a ternary complex with GTP and initiator tRNA. In Pyrococcus furiosus (strain ATCC 43587 / DSM 3638 / JCM 8422 / Vc1), this protein is Translation initiation factor 2 subunit alpha.